Reading from the N-terminus, the 378-residue chain is uncharacterized protein (378 aa).

This sequence belongs to the IIV-6 329R family.

This is an uncharacterized protein from Acheta domesticus (House cricket).